We begin with the raw amino-acid sequence, 490 residues long: Aspartyl/glutamyl-tRNA(Asn/Gln) amidotransferase subunit B (490 aa).

Belongs to the GatB/GatE family. GatB subfamily. As to quaternary structure, heterotrimer of A, B and C subunits.

The catalysed reaction is L-glutamyl-tRNA(Gln) + L-glutamine + ATP + H2O = L-glutaminyl-tRNA(Gln) + L-glutamate + ADP + phosphate + H(+). It catalyses the reaction L-aspartyl-tRNA(Asn) + L-glutamine + ATP + H2O = L-asparaginyl-tRNA(Asn) + L-glutamate + ADP + phosphate + 2 H(+). Allows the formation of correctly charged Asn-tRNA(Asn) or Gln-tRNA(Gln) through the transamidation of misacylated Asp-tRNA(Asn) or Glu-tRNA(Gln) in organisms which lack either or both of asparaginyl-tRNA or glutaminyl-tRNA synthetases. The reaction takes place in the presence of glutamine and ATP through an activated phospho-Asp-tRNA(Asn) or phospho-Glu-tRNA(Gln). This chain is Aspartyl/glutamyl-tRNA(Asn/Gln) amidotransferase subunit B, found in Burkholderia mallei (strain NCTC 10247).